Here is a 422-residue protein sequence, read N- to C-terminus: UDP-N-acetylglucosamine 1-carboxyvinyltransferase (422 aa).

Position 23-24 (23-24) interacts with phosphoenolpyruvate; it reads KN. Arg-92 serves as a coordination point for UDP-N-acetyl-alpha-D-glucosamine. The active-site Proton donor is the Cys-116. 2-(S-cysteinyl)pyruvic acid O-phosphothioketal is present on Cys-116. UDP-N-acetyl-alpha-D-glucosamine contacts are provided by residues 121 to 125, 161 to 164, Asp-306, and Ile-328; these read RPVDL and KVSV.

This sequence belongs to the EPSP synthase family. MurA subfamily.

It localises to the cytoplasm. The catalysed reaction is phosphoenolpyruvate + UDP-N-acetyl-alpha-D-glucosamine = UDP-N-acetyl-3-O-(1-carboxyvinyl)-alpha-D-glucosamine + phosphate. It functions in the pathway cell wall biogenesis; peptidoglycan biosynthesis. Cell wall formation. Adds enolpyruvyl to UDP-N-acetylglucosamine. The sequence is that of UDP-N-acetylglucosamine 1-carboxyvinyltransferase from Aliivibrio fischeri (strain ATCC 700601 / ES114) (Vibrio fischeri).